A 343-amino-acid chain; its full sequence is Lumican (343 aa).

The signal sequence occupies residues 1–18 (MTLNSLPIFLVLISGIFC). At glutamine 19 the chain carries Pyrrolidone carboxylic acid. 2 positions are modified to sulfotyrosine: tyrosine 20 and tyrosine 22. The LRRNT domain occupies 31 to 69 (DPFGPSTAVCAPECNCPLSYPTAMYCDNLKLKTIPIVPS). 8 LRR repeats span residues 70 to 91 (GIKYLYLRNNMIESIEENTFDN), 94 to 117 (DLQWLILDHNHLENSKIKGRVFSK), 120 to 140 (NLKKLHINYNNLTEAVGPLPK), 141 to 162 (TLDDLQLSHNKITKVNPGALEG), 165 to 186 (NLTVIHLQNNQLKADSISGAFK), 190 to 211 (SLLYLDLSFNQLTKLPTGLPHS), 212 to 232 (LLMLYFDNNQISNIPDEYFQG), and 235 to 255 (TLQYLRLSHNKLTDSGIPGNV). Asparagine 91 is a glycosylation site (N-linked (GlcNAc...) (keratan sulfate) asparagine). Asparagine 130 carries N-linked (GlcNAc...) (keratan sulfate) asparagine glycosylation. Asparagine 165 carries N-linked (GlcNAc...) (keratan sulfate) asparagine glycosylation. The N-linked (GlcNAc...) (keratan sulfate) asparagine glycan is linked to asparagine 257. LRR repeat units lie at residues 260-281 (SLVELDLSFNQLKSIPTVSENL), 282-301 (ENFYLQVNKINKFPLSSFCK), and 310-330 (KITHLRLDGNNLTRADLPQEM). Cysteine 300 and cysteine 333 are joined by a disulfide. N-linked (GlcNAc...) asparagine glycosylation occurs at asparagine 320.

The protein belongs to the small leucine-rich proteoglycan (SLRP) family. SLRP class II subfamily. Binds to laminin. In terms of processing, contains keratan sulfate.

The protein localises to the secreted. The protein resides in the extracellular space. It is found in the extracellular matrix. This is Lumican (LUM) from Coturnix japonica (Japanese quail).